We begin with the raw amino-acid sequence, 318 residues long: Oncosphere antigen A (318 aa).

3 Fibronectin type-III domains span residues 6–103 (IPQN…TPLP), 109–207 (KPSF…ISRA), and 211–308 (VPQN…TPSV).

This is Oncosphere antigen A (ONCA) from Hydatigena taeniaeformis (Feline tapeworm).